The chain runs to 212 residues: Thymidylate kinase (212 aa).

11–18 (GPEGAGKT) provides a ligand contact to ATP.

It belongs to the thymidylate kinase family.

The enzyme catalyses dTMP + ATP = dTDP + ADP. In terms of biological role, phosphorylation of dTMP to form dTDP in both de novo and salvage pathways of dTTP synthesis. The chain is Thymidylate kinase from Streptococcus pneumoniae (strain ATCC 700669 / Spain 23F-1).